We begin with the raw amino-acid sequence, 416 residues long: Serine hydroxymethyltransferase (416 aa).

(6S)-5,6,7,8-tetrahydrofolate contacts are provided by residues Leu-120 and 124–126; that span reads GHL. At Lys-230 the chain carries N6-(pyridoxal phosphate)lysine. (6S)-5,6,7,8-tetrahydrofolate is bound at residue Glu-246.

Belongs to the SHMT family. Homodimer. Pyridoxal 5'-phosphate is required as a cofactor.

The protein resides in the cytoplasm. The catalysed reaction is (6R)-5,10-methylene-5,6,7,8-tetrahydrofolate + glycine + H2O = (6S)-5,6,7,8-tetrahydrofolate + L-serine. It functions in the pathway one-carbon metabolism; tetrahydrofolate interconversion. The protein operates within amino-acid biosynthesis; glycine biosynthesis; glycine from L-serine: step 1/1. Catalyzes the reversible interconversion of serine and glycine with tetrahydrofolate (THF) serving as the one-carbon carrier. This reaction serves as the major source of one-carbon groups required for the biosynthesis of purines, thymidylate, methionine, and other important biomolecules. Also exhibits THF-independent aldolase activity toward beta-hydroxyamino acids, producing glycine and aldehydes, via a retro-aldol mechanism. This Onion yellows phytoplasma (strain OY-M) protein is Serine hydroxymethyltransferase.